A 398-amino-acid chain; its full sequence is Acetate kinase (398 aa).

Asn-7 is a Mg(2+) binding site. Residue Lys-14 coordinates ATP. Arg-91 contributes to the substrate binding site. Residue Asp-148 is the Proton donor/acceptor of the active site. Residues 208–212 (HIGNG), 283–285 (DLR), and 331–335 (GVGEN) contribute to the ATP site. Glu-385 contributes to the Mg(2+) binding site.

The protein belongs to the acetokinase family. As to quaternary structure, homodimer. The cofactor is Mg(2+). Requires Mn(2+) as cofactor.

Its subcellular location is the cytoplasm. It catalyses the reaction acetate + ATP = acetyl phosphate + ADP. The protein operates within metabolic intermediate biosynthesis; acetyl-CoA biosynthesis; acetyl-CoA from acetate: step 1/2. Catalyzes the formation of acetyl phosphate from acetate and ATP. Can also catalyze the reverse reaction. This chain is Acetate kinase, found in Porphyromonas gingivalis (strain ATCC 33277 / DSM 20709 / CIP 103683 / JCM 12257 / NCTC 11834 / 2561).